Consider the following 363-residue polypeptide: Flagellar P-ring protein 2 (363 aa).

Positions 1–20 are cleaved as a signal peptide; sequence MKLRTCCISLMLLLALPLQA.

Belongs to the FlgI family. The basal body constitutes a major portion of the flagellar organelle and consists of four rings (L,P,S, and M) mounted on a central rod.

The protein localises to the periplasm. The protein resides in the bacterial flagellum basal body. In terms of biological role, assembles around the rod to form the L-ring and probably protects the motor/basal body from shearing forces during rotation. The chain is Flagellar P-ring protein 2 from Photobacterium profundum (strain SS9).